The primary structure comprises 271 residues: Eukaryotic translation initiation factor 3 subunit G (271 aa).

Disordered stretches follow at residues 1 to 26 (MSTTVIGSWADAGDEFSAPDITTNPD), 63 to 119 (AQRK…AQKL), and 147 to 187 (TTSS…RDDS). Ser-77 is modified (phosphoserine). The region spanning 188–267 (TTLKVSQLNS…LILHLEWSKK (80 aa)) is the RRM domain.

It belongs to the eIF-3 subunit G family. In terms of assembly, component of the eukaryotic translation initiation factor 3 (eIF-3) complex.

It is found in the cytoplasm. RNA-binding component of the eukaryotic translation initiation factor 3 (eIF-3) complex, which is involved in protein synthesis of a specialized repertoire of mRNAs and, together with other initiation factors, stimulates binding of mRNA and methionyl-tRNAi to the 40S ribosome. The eIF-3 complex specifically targets and initiates translation of a subset of mRNAs involved in cell proliferation. This subunit can bind 18S rRNA. The protein is Eukaryotic translation initiation factor 3 subunit G of Scheffersomyces stipitis (strain ATCC 58785 / CBS 6054 / NBRC 10063 / NRRL Y-11545) (Yeast).